A 173-amino-acid chain; its full sequence is N-alpha-acetyltransferase 20 (173 aa).

Residues 2-151 (TTIRRFVCDD…DALDMRKALP (150 aa)) form the N-acetyltransferase domain.

It belongs to the acetyltransferase family. ARD1 subfamily.

Seems to be involved in N-acetylation. This Dictyostelium discoideum (Social amoeba) protein is N-alpha-acetyltransferase 20 (nat5).